Here is a 146-residue protein sequence, read N- to C-terminus: Large ribosomal subunit protein bL21 (146 aa).

Residues 117 to 146 are disordered; sequence ITIGKSAPKSSSKKETVKKETKPKSEKSTN. Positions 128–146 are enriched in basic and acidic residues; the sequence is SKKETVKKETKPKSEKSTN.

It belongs to the bacterial ribosomal protein bL21 family. Part of the 50S ribosomal subunit. Contacts protein L20.

In terms of biological role, this protein binds to 23S rRNA in the presence of protein L20. The protein is Large ribosomal subunit protein bL21 of Prochlorococcus marinus (strain MIT 9301).